Consider the following 191-residue polypeptide: Adenine phosphoribosyltransferase (191 aa).

Belongs to the purine/pyrimidine phosphoribosyltransferase family. In terms of assembly, homodimer.

It is found in the cytoplasm. The enzyme catalyses AMP + diphosphate = 5-phospho-alpha-D-ribose 1-diphosphate + adenine. It functions in the pathway purine metabolism; AMP biosynthesis via salvage pathway; AMP from adenine: step 1/1. In terms of biological role, catalyzes a salvage reaction resulting in the formation of AMP, that is energically less costly than de novo synthesis. This is Adenine phosphoribosyltransferase from Clavibacter sepedonicus (Clavibacter michiganensis subsp. sepedonicus).